The sequence spans 328 residues: Phenylalanine--tRNA ligase alpha subunit (328 aa).

This sequence belongs to the class-II aminoacyl-tRNA synthetase family. Phe-tRNA synthetase alpha subunit type 1 subfamily. Tetramer of two alpha and two beta subunits. Mg(2+) serves as cofactor.

Its subcellular location is the cytoplasm. It carries out the reaction tRNA(Phe) + L-phenylalanine + ATP = L-phenylalanyl-tRNA(Phe) + AMP + diphosphate + H(+). The polypeptide is Phenylalanine--tRNA ligase alpha subunit (Buchnera aphidicola subsp. Baizongia pistaciae (strain Bp)).